The chain runs to 473 residues: Photosystem II CP43 reaction center protein (473 aa).

Positions 1 to 14 (MKTLYSLRRFYHVE) are excised as a propeptide. An N-acetylthreonine modification is found at Thr15. Thr15 is subject to Phosphothreonine. Helical transmembrane passes span 69–93 (LFEV…PHLA), 134–155 (LLGP…KDRN), 178–200 (KALY…RKIA), 255–275 (KPFA…LSYS), and 291–312 (WFNN…ASQA). Glu367 is a [CaMn4O5] cluster binding site. A helical transmembrane segment spans residues 447–471 (RARAAAAGFEKGIDRDFEPVLSMTP).

Belongs to the PsbB/PsbC family. PsbC subfamily. As to quaternary structure, PSII is composed of 1 copy each of membrane proteins PsbA, PsbB, PsbC, PsbD, PsbE, PsbF, PsbH, PsbI, PsbJ, PsbK, PsbL, PsbM, PsbT, PsbX, PsbY, PsbZ, Psb30/Ycf12, at least 3 peripheral proteins of the oxygen-evolving complex and a large number of cofactors. It forms dimeric complexes. The cofactor is Binds multiple chlorophylls and provides some of the ligands for the Ca-4Mn-5O cluster of the oxygen-evolving complex. It may also provide a ligand for a Cl- that is required for oxygen evolution. PSII binds additional chlorophylls, carotenoids and specific lipids..

The protein localises to the plastid membrane. Its function is as follows. One of the components of the core complex of photosystem II (PSII). It binds chlorophyll and helps catalyze the primary light-induced photochemical processes of PSII. PSII is a light-driven water:plastoquinone oxidoreductase, using light energy to abstract electrons from H(2)O, generating O(2) and a proton gradient subsequently used for ATP formation. This chain is Photosystem II CP43 reaction center protein, found in Cuscuta exaltata (Tall dodder).